A 266-amino-acid polypeptide reads, in one-letter code: Metallo-beta-lactamase VIM-1 (266 aa).

The first 20 residues, 1–20 (MLKVISSLLVYMTASVMAVA), serve as a signal peptide directing secretion. Residues His-114, His-116, Asp-118, His-179, Cys-198, and His-240 each coordinate Zn(2+).

It belongs to the metallo-beta-lactamase superfamily. Class-B beta-lactamase family. Monomer. It depends on Zn(2+) as a cofactor.

Its subcellular location is the periplasm. The catalysed reaction is a beta-lactam + H2O = a substituted beta-amino acid. Weakly inhibited by beta-lactamase-blocking agent sulbactam. Its function is as follows. Class B beta-lactamase which confers resistance to the beta-lactam antibiotics, including penicillins, cephalosporins and carbapenems. Acts via hydrolysis of the beta-lactam ring. Has penicillin-, cephalosporin- and carbapenem-hydrolyzing activities. In Pseudomonas aeruginosa (strain ATCC 15692 / DSM 22644 / CIP 104116 / JCM 14847 / LMG 12228 / 1C / PRS 101 / PAO1), this protein is Metallo-beta-lactamase VIM-1.